Reading from the N-terminus, the 240-residue chain is Biosynthetic peptidoglycan transglycosylase (240 aa).

The helical transmembrane segment at 16–36 (VLMALLCLFLIYELAMFSMVV) threads the bilayer.

Belongs to the glycosyltransferase 51 family.

The protein resides in the cell inner membrane. It carries out the reaction [GlcNAc-(1-&gt;4)-Mur2Ac(oyl-L-Ala-gamma-D-Glu-L-Lys-D-Ala-D-Ala)](n)-di-trans,octa-cis-undecaprenyl diphosphate + beta-D-GlcNAc-(1-&gt;4)-Mur2Ac(oyl-L-Ala-gamma-D-Glu-L-Lys-D-Ala-D-Ala)-di-trans,octa-cis-undecaprenyl diphosphate = [GlcNAc-(1-&gt;4)-Mur2Ac(oyl-L-Ala-gamma-D-Glu-L-Lys-D-Ala-D-Ala)](n+1)-di-trans,octa-cis-undecaprenyl diphosphate + di-trans,octa-cis-undecaprenyl diphosphate + H(+). The protein operates within cell wall biogenesis; peptidoglycan biosynthesis. Peptidoglycan polymerase that catalyzes glycan chain elongation from lipid-linked precursors. The protein is Biosynthetic peptidoglycan transglycosylase of Bordetella avium (strain 197N).